The following is a 192-amino-acid chain: ATP synthase subunit b 2 (192 aa).

A helical membrane pass occupies residues 39 to 59; that stretch reads SGFLAQLIWLALAFGLLYYLM.

It belongs to the ATPase B chain family. As to quaternary structure, F-type ATPases have 2 components, F(1) - the catalytic core - and F(0) - the membrane proton channel. F(1) has five subunits: alpha(3), beta(3), gamma(1), delta(1), epsilon(1). F(0) has three main subunits: a(1), b(2) and c(10-14). The alpha and beta chains form an alternating ring which encloses part of the gamma chain. F(1) is attached to F(0) by a central stalk formed by the gamma and epsilon chains, while a peripheral stalk is formed by the delta and b chains.

It localises to the cell inner membrane. F(1)F(0) ATP synthase produces ATP from ADP in the presence of a proton or sodium gradient. F-type ATPases consist of two structural domains, F(1) containing the extramembraneous catalytic core and F(0) containing the membrane proton channel, linked together by a central stalk and a peripheral stalk. During catalysis, ATP synthesis in the catalytic domain of F(1) is coupled via a rotary mechanism of the central stalk subunits to proton translocation. Its function is as follows. Component of the F(0) channel, it forms part of the peripheral stalk, linking F(1) to F(0). The b'-subunit is a diverged and duplicated form of b found in plants and photosynthetic bacteria. This chain is ATP synthase subunit b 2 (atpF2), found in Methylobacterium radiotolerans (strain ATCC 27329 / DSM 1819 / JCM 2831 / NBRC 15690 / NCIMB 10815 / 0-1).